A 456-amino-acid polypeptide reads, in one-letter code: tRNA-2-methylthio-N(6)-dimethylallyladenosine synthase (456 aa).

Residues 2-119 form the MTTase N-terminal domain; that stretch reads KKVFIKTYGC…LPDLIAARRR (118 aa). Residues cysteine 11, cysteine 48, cysteine 82, cysteine 156, cysteine 160, and cysteine 163 each contribute to the [4Fe-4S] cluster site. In terms of domain architecture, Radical SAM core spans 142–375; the sequence is RVDGASAYVS…QATIEENVAR (234 aa). Positions 378–448 constitute a TRAM domain; the sequence is QGMVGSVQRI…PHSLRGEVAE (71 aa).

The protein belongs to the methylthiotransferase family. MiaB subfamily. Monomer. Requires [4Fe-4S] cluster as cofactor.

Its subcellular location is the cytoplasm. It catalyses the reaction N(6)-dimethylallyladenosine(37) in tRNA + (sulfur carrier)-SH + AH2 + 2 S-adenosyl-L-methionine = 2-methylsulfanyl-N(6)-dimethylallyladenosine(37) in tRNA + (sulfur carrier)-H + 5'-deoxyadenosine + L-methionine + A + S-adenosyl-L-homocysteine + 2 H(+). In terms of biological role, catalyzes the methylthiolation of N6-(dimethylallyl)adenosine (i(6)A), leading to the formation of 2-methylthio-N6-(dimethylallyl)adenosine (ms(2)i(6)A) at position 37 in tRNAs that read codons beginning with uridine. The sequence is that of tRNA-2-methylthio-N(6)-dimethylallyladenosine synthase from Ralstonia pickettii (strain 12J).